The primary structure comprises 522 residues: Maturase K (522 aa).

The protein belongs to the intron maturase 2 family. MatK subfamily.

The protein resides in the plastid. Its subcellular location is the chloroplast. Its function is as follows. Usually encoded in the trnK tRNA gene intron. Probably assists in splicing its own and other chloroplast group II introns. The protein is Maturase K of Dianella ensifolia (Flax lily).